We begin with the raw amino-acid sequence, 848 residues long: Translation initiation factor IF-2 (848 aa).

The interval 1–265 (MSDTDGKKPL…GNQRAEKQVR (265 aa)) is disordered. The segment covering 89–162 (KAREVEEAAQ…AEIAKPKTEA (74 aa)) has biased composition (basic and acidic residues). Over residues 163-179 (RPATPADRAAAEAAAVR) the composition is skewed to low complexity. The segment covering 191 to 219 (RKTDRDRDTRGGGGDDRDSRNKGRDDSRR) has biased composition (basic and acidic residues). Residues 346 to 514 (PRAPIITIMG…AIALQAEILE (169 aa)) enclose the tr-type G domain. The tract at residues 355-362 (GHVDHGKT) is G1. 355–362 (GHVDHGKT) is a GTP binding site. The G2 stretch occupies residues 380-384 (GITQH). A G3 region spans residues 402–405 (DTPG). GTP is bound by residues 402–406 (DTPGH) and 456–459 (NKID). A G4 region spans residues 456–459 (NKID). The segment at 492–494 (SAK) is G5.

It belongs to the TRAFAC class translation factor GTPase superfamily. Classic translation factor GTPase family. IF-2 subfamily.

Its subcellular location is the cytoplasm. One of the essential components for the initiation of protein synthesis. Protects formylmethionyl-tRNA from spontaneous hydrolysis and promotes its binding to the 30S ribosomal subunits. Also involved in the hydrolysis of GTP during the formation of the 70S ribosomal complex. The protein is Translation initiation factor IF-2 of Paracoccus denitrificans (strain Pd 1222).